The following is a 380-amino-acid chain: MKKSIGILSPGVALGMAGSAMSSKFFLVALAIFFSFAQVVIEANSWWSLGMNNPVQMSEVYIIGAQPLCSQLAGLSQGQKKLCHLYQDHMQYIGEGAKTGIKECQYQFRHRRWNCSTVDNTSVFGRVMQIGSRETAFTYAVSAAGVVNAMSRACREGELSTCGCSRAARPKDLPRDWLWGGCGDNIDYGYRFAKEFVDARERERIHAKGSYESARILMNLHNNEAGRRTVYNLADVACKCHGVSGSCSLKTCWLQLADFRKVGDALKEKYDSAAAMRLNSRGKLVQVNSRFNSPTTQDLVYIDPSPDYCVRNESTGSLGTQGRLCNKTSEGMDGCELMCCGRGYDQFKTVQTERCHCKFHWCCYVKCKKCTEIVDQFVCK.

An N-terminal signal peptide occupies residues 1-35; the sequence is MKKSIGILSPGVALGMAGSAMSSKFFLVALAIFFS. A propeptide spanning residues 36–61 is cleaved from the precursor; sequence FAQVVIEANSWWSLGMNNPVQMSEVY. A disulfide bridge links Cys104 with Cys115. N-linked (GlcNAc...) asparagine glycans are attached at residues Asn114 and Asn120. 10 disulfides stabilise this stretch: Cys154–Cys162, Cys164–Cys182, Cys238–Cys252, Cys240–Cys247, Cys309–Cys340, Cys325–Cys335, Cys339–Cys379, Cys355–Cys370, Cys357–Cys367, and Cys362–Cys363. Ser244 is lipidated: O-palmitoleoyl serine; by PORCN. Asn312 and Asn326 each carry an N-linked (GlcNAc...) asparagine glycan.

This sequence belongs to the Wnt family. As to quaternary structure, forms a soluble 1:1 complex with AFM; this prevents oligomerization and is required for prolonged biological activity. The complex with AFM may represent the physiological form in body fluids. Homooligomer; disulfide-linked, leading to inactivation (in vitro). Interacts with PORCN. Interacts with WLS. Interacts with glypican GCP3. Interacts with PKD1 (via extracellular domain). Interacts with TMEM67. Post-translationally, glycosylation is necessary for secretion but not for activity. In terms of processing, palmitoleoylation is required for efficient binding to frizzled receptors. Depalmitoleoylation leads to Wnt signaling pathway inhibition. Proteolytic processing by TIKI1 and TIKI2 promotes oxidation and formation of large disulfide-bond oligomers, leading to inactivation of WNT5A. In terms of tissue distribution, expression is increased in differentiated thyroid carcinomas compared to normal thyroid tissue and anaplastic thyroid tumors where expression is low or undetectable. Expression is found in thyrocytes but not in stromal cells (at protein level). Detected in neonate heart and lung.

Its subcellular location is the secreted. The protein localises to the extracellular space. The protein resides in the extracellular matrix. Ligand for members of the frizzled family of seven transmembrane receptors. Can activate or inhibit canonical Wnt signaling, depending on receptor context. In the presence of FZD4, activates beta-catenin signaling. In the presence of ROR2, inhibits the canonical Wnt pathway by promoting beta-catenin degradation through a GSK3-independent pathway which involves down-regulation of beta-catenin-induced reporter gene expression. Suppression of the canonical pathway allows chondrogenesis to occur and inhibits tumor formation. Stimulates cell migration. Decreases proliferation, migration, invasiveness and clonogenicity of carcinoma cells and may act as a tumor suppressor. Mediates motility of melanoma cells. Required during embryogenesis for extension of the primary anterior-posterior axis and for outgrowth of limbs and the genital tubercle. Inhibits type II collagen expression in chondrocytes. The polypeptide is Protein Wnt-5a (WNT5A) (Homo sapiens (Human)).